The chain runs to 1359 residues: NPC1-like intracellular cholesterol transporter 1 (1359 aa).

A signal peptide spans 1 to 21 (MAEAGLRGWLLWALLLRLAQS). At 22-284 (EPYTTIHQPG…TFYLGQMPGS (263 aa)) the chain is on the extracellular side. 9 disulfide bridges follow: Cys-33–Cys-90, Cys-39–Cys-57, Cys-78–Cys-125, Cys-91–Cys-129, Cys-113–Cys-254, Cys-116–Cys-172, Cys-189–Cys-197, Cys-243–Cys-259, and Cys-256–Cys-263. Asn-54 carries an N-linked (GlcNAc...) asparagine glycan. Residues Asn-132 and Asn-138 are each glycosylated (N-linked (GlcNAc...) asparagine). Residue Asn-244 is glycosylated (N-linked (GlcNAc...) asparagine). The chain crosses the membrane as a helical span at residues 285 to 305 (LVLIIILCSVFAVVTILLVGF). The Cytoplasmic portion of the chain corresponds to 306–351 (RVAPARDKSKMVDPKKGTSLSDKLSFSTHTLLGQFFQGWGTWVASW). The chain crosses the membrane as a helical span at residues 352-372 (PLTILVLSVIPVVALAAGLVF). At 373 to 632 (TELTTDPVEL…DEINRTTAED (260 aa)) the chain is on the extracellular side. 6 N-linked (GlcNAc...) asparagine glycosylation sites follow: Asn-416, Asn-431, Asn-464, Asn-479, Asn-497, and Asn-506. Cys-471 and Cys-485 are disulfide-bonded. An intrachain disulfide couples Cys-525 to Cys-542. Residue Asn-626 is glycosylated (N-linked (GlcNAc...) asparagine). The 166-residue stretch at 632–797 (DLPIFATSYI…MSAFVALLSL (166 aa)) folds into the SSD domain. Residues 633 to 653 (LPIFATSYIVIFLYISLALGS) traverse the membrane as a helical segment. The Cytoplasmic portion of the chain corresponds to 654–666 (YSSWSRVMVDSKA). A helical transmembrane segment spans residues 667–687 (TLGLGGVAVVLGAVMAAMGFF). Residues 688–696 (SYLGIRSSL) are Extracellular-facing. A helical membrane pass occupies residues 697–717 (VILQVVPFLVLSVGADNIFIF). Residues 718–742 (VLEYQRLPRRPGEPREVHIGRALGR) lie on the Cytoplasmic side of the membrane. The helical transmembrane segment at 743 to 763 (VAPSMLLCSLSEAICFFLGAL) threads the bilayer. Residues 764–776 (TPMPAVRTFALTS) lie on the Extracellular side of the membrane. A helical membrane pass occupies residues 777 to 797 (GLAVILDFLLQMSAFVALLSL). Over 798 to 846 (DSKRQEASRLDVCCCVKPQELPPPGQGEGLLLGFFQKAYAPFLLHWITR) the chain is Cytoplasmic. Residues 847-867 (GVVLLLFLALFGVSLYSMCHI) traverse the membrane as a helical segment. Residues 868-1139 (SVGLDQELAL…EQYLTILPEG (272 aa)) are Extracellular-facing. Disulfide bonds link Cys-920–Cys-925, Cys-966–Cys-1024, and Cys-980–Cys-989. A helical transmembrane segment spans residues 1140–1160 (LFMLSLCLVPTFAVSCLLLGL). Topologically, residues 1161–1168 (DLRSGLLN) are cytoplasmic. A helical transmembrane segment spans residues 1169–1189 (LLSIVMILVDTVGFMALWGIS). The Extracellular portion of the chain corresponds to 1190–1191 (YN). Residues 1192–1212 (AVSLINLVSAVGMSVEFVSHI) traverse the membrane as a helical segment. Topologically, residues 1213–1236 (TRSFAISTKPTWLERAKEATISMG) are cytoplasmic. The helical transmembrane segment at 1237-1257 (SAVFAGVAMTNLPGILVLGLA) threads the bilayer. Residues 1258–1268 (KAQLIQIFFFR) are Extracellular-facing. A helical membrane pass occupies residues 1269–1289 (LNLLITLLGLLHGLVFLPVIL). Residues 1290–1359 (SYVGPDVNPA…NFLPNNGRQF (70 aa)) lie on the Cytoplasmic side of the membrane.

This sequence belongs to the patched family. In terms of assembly, interacts with RAB11A, MYO5B and RAB11FIP2. Interaction with RAB11A, MYO5B and RAB11FIP2 is required for proper transport to the plasma membrane upon cholesterol depletion. Interacts with NPC2. Interacts with LIMA1. Post-translationally, highly glycosylated. In terms of tissue distribution, widely expressed. Expressed in liver. Also expressed in small intestine, pancreas, kidney, lung, pancreas, spleen, heart, gall bladder, brain, testis, stomach and muscle.

The protein resides in the apical cell membrane. The protein localises to the cell membrane. Its subcellular location is the cytoplasmic vesicle membrane. It carries out the reaction cholesterol(in) = cholesterol(out). The enzyme catalyses sitosterol(out) = sitosterol(in). Functionally, plays a major role in cholesterol homeostasis. Critical for the uptake of cholesterol across the plasma membrane of the intestinal enterocyte. Involved in plant sterol absorption, it transports sitosterol, although at lower rates than cholesterol. Is the direct molecular target of ezetimibe, a drug that inhibits cholesterol absorption and is approved for the treatment of hypercholesterolemia. May have a function in the transport of multiple lipids and their homeostasis, thereby influencing lipid metabolism regulation. May be involved in caveolin trafficking from the plasma membrane. In addition, acts as a negative regulator of NPC2 and down-regulates its expression and secretion by inhibiting its maturation and accelerating its degradation. This is NPC1-like intracellular cholesterol transporter 1 from Homo sapiens (Human).